We begin with the raw amino-acid sequence, 460 residues long: tRNA-splicing endonuclease subunit Sen2 (460 aa).

The segment at 143–215 (EKEETPQHEP…SPSSHNGHVA (73 aa)) is disordered. Residues 159–170 (SSLEGRVEKDEL) are compositionally biased toward basic and acidic residues. Active-site residues include tyrosine 364 and histidine 372. Serine 403, serine 406, and serine 410 each carry phosphoserine. The active site involves lysine 411.

The protein belongs to the tRNA-intron endonuclease family. TRNA splicing endonuclease is a heterotetramer composed of TSEN2, TSEN15, TSEN34/LENG5 and TSEN54. tRNA splicing endonuclease complex also contains proteins of the pre-mRNA 3'-end processing machinery such as CLP1, CPSF1, CPSF4 and CSTF2.

It localises to the nucleus. The protein resides in the nucleolus. It catalyses the reaction pretRNA = a 3'-half-tRNA molecule with a 5'-OH end + a 5'-half-tRNA molecule with a 2',3'-cyclic phosphate end + an intron with a 2',3'-cyclic phosphate and a 5'-hydroxyl terminus.. Constitutes one of the two catalytic subunit of the tRNA-splicing endonuclease complex, a complex responsible for identification and cleavage of the splice sites in pre-tRNA. It cleaves pre-tRNA at the 5'- and 3'-splice sites to release the intron. The products are an intron and two tRNA half-molecules bearing 2',3'-cyclic phosphate and 5'-OH termini. There are no conserved sequences at the splice sites, but the intron is invariably located at the same site in the gene, placing the splice sites an invariant distance from the constant structural features of the tRNA body. Probably carries the active site for 5'-splice site cleavage. The tRNA splicing endonuclease is also involved in mRNA processing via its association with pre-mRNA 3'-end processing factors, establishing a link between pre-tRNA splicing and pre-mRNA 3'-end formation, suggesting that the endonuclease subunits function in multiple RNA-processing events. The sequence is that of tRNA-splicing endonuclease subunit Sen2 (Tsen2) from Mus musculus (Mouse).